A 405-amino-acid chain; its full sequence is Serine/threonine transporter SstT (405 aa).

9 consecutive transmembrane segments (helical) span residues glycine 13–serine 33, isoleucine 43–valine 63, isoleucine 81–phenylalanine 101, alanine 140–leucine 160, phenylalanine 191–glycine 211, leucine 215–valine 235, methionine 297–isoleucine 317, alanine 338–isoleucine 358, and isoleucine 362–threonine 382.

It belongs to the dicarboxylate/amino acid:cation symporter (DAACS) (TC 2.A.23) family.

The protein resides in the cell inner membrane. The enzyme catalyses L-serine(in) + Na(+)(in) = L-serine(out) + Na(+)(out). The catalysed reaction is L-threonine(in) + Na(+)(in) = L-threonine(out) + Na(+)(out). Its function is as follows. Involved in the import of serine and threonine into the cell, with the concomitant import of sodium (symport system). This is Serine/threonine transporter SstT from Vibrio cholerae serotype O1 (strain ATCC 39315 / El Tor Inaba N16961).